Here is a 403-residue protein sequence, read N- to C-terminus: Argininosuccinate synthase (403 aa).

ATP-binding positions include Ala12–Ser20 and Ala39. Positions 91 and 96 each coordinate L-citrulline. Position 121 (Gly121) interacts with ATP. 3 residues coordinate L-aspartate: Thr123, Asn127, and Asp128. An L-citrulline-binding site is contributed by Asn127. L-citrulline is bound by residues Arg131, Ser180, Ser189, Glu265, and Tyr277.

This sequence belongs to the argininosuccinate synthase family. Type 1 subfamily. As to quaternary structure, homotetramer.

It is found in the cytoplasm. It catalyses the reaction L-citrulline + L-aspartate + ATP = 2-(N(omega)-L-arginino)succinate + AMP + diphosphate + H(+). Its pathway is amino-acid biosynthesis; L-arginine biosynthesis; L-arginine from L-ornithine and carbamoyl phosphate: step 2/3. The sequence is that of Argininosuccinate synthase from Vibrio vulnificus (strain CMCP6).